The sequence spans 91 residues: Early E3B 10.4 kDa protein (91 aa).

An N-terminal signal peptide occupies residues 1–22 (MIPRVLILLTLVALFCACSTLA). Topologically, residues 23-34 (AVAHIEVDCIPP) are lumenal. Residues 35-60 (FTVYLLYGFVTLILICSLVTVVIAFI) traverse the membrane as a helical segment. The Cytoplasmic portion of the chain corresponds to 61–91 (QFIDWICVRIAYLRHHPQYRDRTIADLLRIL).

It belongs to the adenoviridae E3B family.

It localises to the host endoplasmic reticulum membrane. Down-regulates the EGF receptor. The chain is Early E3B 10.4 kDa protein from Homo sapiens (Human).